The chain runs to 397 residues: Phosphoglycerate kinase (397 aa).

Residues 25 to 27, R41, 64 to 67, R118, and R151 contribute to the substrate site; these read DLN and HLGR. ATP contacts are provided by residues K202, E324, and 350 to 353; that span reads GGDT.

The protein belongs to the phosphoglycerate kinase family. In terms of assembly, monomer.

The protein localises to the cytoplasm. It catalyses the reaction (2R)-3-phosphoglycerate + ATP = (2R)-3-phospho-glyceroyl phosphate + ADP. The protein operates within carbohydrate degradation; glycolysis; pyruvate from D-glyceraldehyde 3-phosphate: step 2/5. This Acidovorax sp. (strain JS42) protein is Phosphoglycerate kinase.